Here is a 195-residue protein sequence, read N- to C-terminus: Molybdenum cofactor guanylyltransferase (195 aa).

GTP contacts are provided by residues 12–14 (LAG), Lys25, Asn53, Asp70, and Asp100. Asp100 provides a ligand contact to Mg(2+).

It belongs to the MobA family. In terms of assembly, monomer. The cofactor is Mg(2+).

It is found in the cytoplasm. It catalyses the reaction Mo-molybdopterin + GTP + H(+) = Mo-molybdopterin guanine dinucleotide + diphosphate. Transfers a GMP moiety from GTP to Mo-molybdopterin (Mo-MPT) cofactor (Moco or molybdenum cofactor) to form Mo-molybdopterin guanine dinucleotide (Mo-MGD) cofactor. This chain is Molybdenum cofactor guanylyltransferase, found in Vibrio parahaemolyticus serotype O3:K6 (strain RIMD 2210633).